The following is a 275-amino-acid chain: 2,3,4,5-tetrahydropyridine-2,6-dicarboxylate N-succinyltransferase (275 aa).

Substrate contacts are provided by arginine 106 and aspartate 143.

The protein belongs to the transferase hexapeptide repeat family. In terms of assembly, homotrimer.

Its subcellular location is the cytoplasm. It carries out the reaction (S)-2,3,4,5-tetrahydrodipicolinate + succinyl-CoA + H2O = (S)-2-succinylamino-6-oxoheptanedioate + CoA. The protein operates within amino-acid biosynthesis; L-lysine biosynthesis via DAP pathway; LL-2,6-diaminopimelate from (S)-tetrahydrodipicolinate (succinylase route): step 1/3. This is 2,3,4,5-tetrahydropyridine-2,6-dicarboxylate N-succinyltransferase from Cupriavidus pinatubonensis (strain JMP 134 / LMG 1197) (Cupriavidus necator (strain JMP 134)).